Consider the following 211-residue polypeptide: Degradation in the endoplasmic reticulum protein 1 (211 aa).

Position 1 is an N-acetylmethionine (Met1). Topologically, residues 1 to 14 (MDAVILNLLGDIPL) are cytoplasmic. The helical transmembrane segment at 15 to 32 (VTRLWTIGCLVLSGLTSL) threads the bilayer. Residues 33-67 (RIVDPGKVVYSYDLVFKKGQYGRLLYSIFDYGAFN) lie on the Lumenal side of the membrane. A helical transmembrane segment spans residues 68-85 (WISMINIFVSANHLSTLE). At 86-92 (NSFNLRR) the chain is on the cytoplasmic side. The chain crosses the membrane as a helical span at residues 93–109 (KFCWIIFLLLVILVKMT). At 110 to 117 (SIEQPAAS) the chain is on the lumenal side. A helical membrane pass occupies residues 118–133 (LGVLLHENLVYYELKK). The Cytoplasmic segment spans residues 134–149 (NGNQMNVRFFGAIDVS). Residues 150–165 (PSIFPIYMNAVMYFVY) form a helical membrane-spanning segment. The Lumenal segment spans residues 166 to 168 (KRS). A helical transmembrane segment spans residues 169–189 (WLEIAMNFMPGHVIYYMDDII). Residues 190–211 (GKIYGIDLCKSPYDWFRNTETP) are Cytoplasmic-facing.

Belongs to the derlin family. As to quaternary structure, component of the HRD1 ubiquitin ligase complex which contains the E3 ligase HRD1, its cofactors HRD3, USA1 and DER1, substrate recruiting factor YOS9 and CDC48-binding protein UBX2. Within the complex, interacts with USA1 (via C-terminus). In ERAD-L, HRD3 and YOS9 jointly bind misfolded glycoproteins in the endoplasmic reticulum (ER) lumen. Movement of ERAD-L substrates through the ER membrane is facilitated by HRD1 and DER1 which have lateral gates facing each other and which distort the membrane region between the lateral gates, making it much thinner than a normal phospholipid bilayer. Substrates insert into the membrane as a hairpin loop with one strand interacting with DER1 and the other with HRD1. The HRD1 complex interacts with the heterotrimeric CDC48-NPL4-UFD1 ATPase complex which is recruited by UBX2 via its interaction with CDC48 and which moves ubiquitinated substrates to the cytosol for targeting to the proteasome. N-terminally acetylated by acetyltransferase NatB which enhances DER1 stability and is required for ERAD-L function.

It localises to the endoplasmic reticulum membrane. Its function is as follows. Component of the endoplasmic reticulum-associated degradation (ERAD) pathway. Specifically required for the ERAD-L pathway which mediates the degradation of proteins with misfolded lumenal domains within the endoplasmic reticulum (ER). Facilitates retrotranslocation of misfolded proteins from the ER lumen through the ER membrane in conjunction with HRD1. Both proteins have lateral gates facing each other and distort the membrane region between the lateral gates, making it much thinner than a normal phospholipid bilayer. Substrates insert into the membrane as a hairpin loop with one strand interacting with DER1 and the other with HRD1. The sequence is that of Degradation in the endoplasmic reticulum protein 1 (DER1) from Saccharomyces cerevisiae (strain ATCC 204508 / S288c) (Baker's yeast).